The sequence spans 209 residues: MPKHYCDYCDVFLTHDSASVRKAHNSGRNHLANVRDYYASLGHDKAQSIIDQITSAFESGQGPPPGGFGFGPQHLQAPPQGGFAPPMGGFPPGGFPPGPRPPFPPGPGFPPMMPPGAPPFPPNAMPPPGAFGGPPPFPPNGPPGAPPFPPNASQQGGPPGAPSFPPPPGGFNGPPPPSGQNSQGPPPPTNPGPGGMHPDRARMMGPGGR.

The segment at 4-36 (HYCDYCDVFLTHDSASVRKAHNSGRNHLANVRD) adopts a Matrin-type zinc-finger fold. The span at 72–87 (PQHLQAPPQGGFAPPM) shows a compositional bias: low complexity. Residues 72 to 209 (PQHLQAPPQG…RARMMGPGGR (138 aa)) form a disordered region. Composition is skewed to pro residues over residues 93–150 (GGFP…PFPP) and 159–191 (PGAPSFPPPPGGFNGPPPPSGQNSQGPPPPTNP).

This sequence belongs to the U1 small nuclear ribonucleoprotein C family. In terms of assembly, U1 snRNP is composed of the 7 core Sm proteins B/B', D1, D2, D3, E, F and G that assemble in a heptameric protein ring on the Sm site of the small nuclear RNA to form the core snRNP, and at least 3 U1 snRNP-specific proteins U1-70K, U1-A and U1-C. U1-C interacts with U1 snRNA and the 5' splice-site region of the pre-mRNA.

Its subcellular location is the nucleus. Component of the spliceosomal U1 snRNP, which is essential for recognition of the pre-mRNA 5' splice-site and the subsequent assembly of the spliceosome. U1-C is directly involved in initial 5' splice-site recognition for both constitutive and regulated alternative splicing. The interaction with the 5' splice-site seems to precede base-pairing between the pre-mRNA and the U1 snRNA. Stimulates commitment or early (E) complex formation by stabilizing the base pairing of the 5' end of the U1 snRNA and the 5' splice-site region. In Coprinopsis cinerea (strain Okayama-7 / 130 / ATCC MYA-4618 / FGSC 9003) (Inky cap fungus), this protein is U1 small nuclear ribonucleoprotein C.